Here is a 345-residue protein sequence, read N- to C-terminus: Methylthioribose-1-phosphate isomerase (345 aa).

Residues 44-46, arginine 86, and glutamine 194 contribute to the substrate site; that span reads RGA. Aspartate 235 functions as the Proton donor in the catalytic mechanism. 245–246 contributes to the substrate binding site; the sequence is NK.

Belongs to the eIF-2B alpha/beta/delta subunits family. MtnA subfamily.

The catalysed reaction is 5-(methylsulfanyl)-alpha-D-ribose 1-phosphate = 5-(methylsulfanyl)-D-ribulose 1-phosphate. It functions in the pathway amino-acid biosynthesis; L-methionine biosynthesis via salvage pathway; L-methionine from S-methyl-5-thio-alpha-D-ribose 1-phosphate: step 1/6. Its function is as follows. Catalyzes the interconversion of methylthioribose-1-phosphate (MTR-1-P) into methylthioribulose-1-phosphate (MTRu-1-P). The chain is Methylthioribose-1-phosphate isomerase from Desulfitobacterium hafniense (strain Y51).